The chain runs to 147 residues: Hemoglobin subunit gamma-1 (147 aa).

N-acetylglycine is present on Gly2. Residues 3-147 (HFTEEDKATI…VASALSSRYH (145 aa)) form the Globin domain. Position 13 is a phosphothreonine (Thr13). Residues Ser45, Ser51, and Ser53 each carry the phosphoserine modification. The residue at position 60 (Lys60) is an N6-acetyllysine. His64 is a binding site for heme b. Lys83 carries the post-translational modification N6-acetyllysine. Heme b is bound at residue His93. Residue Cys94 is modified to S-nitrosocysteine. Residue Ser140 is modified to Phosphoserine.

It belongs to the globin family. In terms of assembly, heterotetramer of two alpha chains and two gamma chains in fetal hemoglobin (Hb F). The ratio of gamma-G to gamma-A chains in is approximately 2:1 in infant chimpanzee, and 1:2 in the adult. As to expression, red blood cells.

Gamma chains make up the fetal hemoglobin F, in combination with alpha chains. This chain is Hemoglobin subunit gamma-1 (HBG1), found in Pan troglodytes (Chimpanzee).